A 126-amino-acid polypeptide reads, in one-letter code: Fluoride-specific ion channel FluC (126 aa).

The next 4 helical transmembrane spans lie at 3-23 (PLGF…RWGL), 36-56 (YGTL…VGFF), 68-88 (LLAI…SSEA), and 99-119 (WALL…ALGL). The Na(+) site is built by Gly-76 and Thr-79.

It belongs to the fluoride channel Fluc/FEX (TC 1.A.43) family.

It localises to the cell inner membrane. The catalysed reaction is fluoride(in) = fluoride(out). Its activity is regulated as follows. Na(+) is not transported, but it plays an essential structural role and its presence is essential for fluoride channel function. Functionally, fluoride-specific ion channel. Important for reducing fluoride concentration in the cell, thus reducing its toxicity. The chain is Fluoride-specific ion channel FluC from Cupriavidus pinatubonensis (strain JMP 134 / LMG 1197) (Cupriavidus necator (strain JMP 134)).